A 209-amino-acid polypeptide reads, in one-letter code: GTP-binding protein RHB1 (209 aa).

At Met1 the chain carries N-acetylmethionine. Positions 28, 29, 30, 31, 42, 45, 48, 132, and 172 each coordinate GTP. Thr30 lines the Mg(2+) pocket. The Effector region motif lies at 45-53 (YYPTIENEF). Position 48 (Thr48) interacts with Mg(2+). Residue Cys206 is modified to Cysteine methyl ester. The S-farnesyl cysteine moiety is linked to residue Cys206. Residues 207-209 (SIM) constitute a propeptide, removed in mature form.

This sequence belongs to the small GTPase superfamily. Rheb family. As to quaternary structure, interacts with BTN2.

It is found in the cell membrane. The enzyme catalyses GTP + H2O = GDP + phosphate + H(+). In terms of biological role, binds GTP and exhibits intrinsic GTPase activity. Involved in the regulation of arginine and lysine uptake. Acts through the CAN1 permease. The protein is GTP-binding protein RHB1 (RHB1) of Saccharomyces cerevisiae (strain ATCC 204508 / S288c) (Baker's yeast).